The following is a 225-amino-acid chain: Glycerol-3-phosphate acyltransferase (225 aa).

6 helical membrane-spanning segments follow: residues 1–21, 56–76, 95–115, 134–154, 159–178, and 182–201; these read MAIW…LGSF, GPGL…VALV, IGLW…LGHS, VLLV…ALVV, IVSL…MFVA, and LAYV…RHWA.

The protein belongs to the PlsY family. In terms of assembly, probably interacts with PlsX.

It is found in the cell inner membrane. The catalysed reaction is an acyl phosphate + sn-glycerol 3-phosphate = a 1-acyl-sn-glycero-3-phosphate + phosphate. The protein operates within lipid metabolism; phospholipid metabolism. Functionally, catalyzes the transfer of an acyl group from acyl-phosphate (acyl-PO(4)) to glycerol-3-phosphate (G3P) to form lysophosphatidic acid (LPA). This enzyme utilizes acyl-phosphate as fatty acyl donor, but not acyl-CoA or acyl-ACP. This is Glycerol-3-phosphate acyltransferase from Acaryochloris marina (strain MBIC 11017).